A 326-amino-acid chain; its full sequence is DNA polymerase III subunit delta' (326 aa).

DNA polymerase III contains a core (composed of alpha, epsilon and theta chains) that associates with a tau subunit. This core dimerizes to form the POLIII' complex. PolIII' associates with the gamma complex (composed of gamma, delta, delta', psi and chi chains) and with the beta chain to form the complete DNA polymerase III complex.

It carries out the reaction DNA(n) + a 2'-deoxyribonucleoside 5'-triphosphate = DNA(n+1) + diphosphate. In terms of biological role, DNA polymerase III is a complex, multichain enzyme responsible for most of the replicative synthesis in bacteria. This DNA polymerase also exhibits 3' to 5' exonuclease activity. This is DNA polymerase III subunit delta' (holB) from Buchnera aphidicola subsp. Acyrthosiphon pisum (strain APS) (Acyrthosiphon pisum symbiotic bacterium).